Here is a 366-residue protein sequence, read N- to C-terminus: Peptide chain release factor 2 (366 aa).

Q249 is subject to N5-methylglutamine.

It belongs to the prokaryotic/mitochondrial release factor family. Methylated by PrmC. Methylation increases the termination efficiency of RF2.

The protein resides in the cytoplasm. In terms of biological role, peptide chain release factor 2 directs the termination of translation in response to the peptide chain termination codons UGA and UAA. This Petrotoga mobilis (strain DSM 10674 / SJ95) protein is Peptide chain release factor 2.